Here is a 221-residue protein sequence, read N- to C-terminus: 7-cyano-7-deazaguanine synthase (221 aa).

7 to 17 (LSGGLDSAVSL) is an ATP binding site. 4 residues coordinate Zn(2+): cysteine 192, cysteine 200, cysteine 203, and cysteine 206.

Belongs to the QueC family. In terms of assembly, homodimer. Requires Zn(2+) as cofactor.

It carries out the reaction 7-carboxy-7-deazaguanine + NH4(+) + ATP = 7-cyano-7-deazaguanine + ADP + phosphate + H2O + H(+). The protein operates within purine metabolism; 7-cyano-7-deazaguanine biosynthesis. Its function is as follows. Catalyzes the ATP-dependent conversion of 7-carboxy-7-deazaguanine (CDG) to 7-cyano-7-deazaguanine (preQ(0)). The chain is 7-cyano-7-deazaguanine synthase from Pelotomaculum thermopropionicum (strain DSM 13744 / JCM 10971 / SI).